We begin with the raw amino-acid sequence, 339 residues long: Dihydroorotate dehydrogenase (quinone) (339 aa).

Residues 62–66 (AGMDK) and threonine 86 contribute to the FMN site. Lysine 66 provides a ligand contact to substrate. Position 111–115 (111–115 (NRMGF)) interacts with substrate. Residues asparagine 139 and asparagine 172 each contribute to the FMN site. Asparagine 172 is a binding site for substrate. Serine 175 functions as the Nucleophile in the catalytic mechanism. Asparagine 177 is a substrate binding site. Positions 217 and 245 each coordinate FMN. 246 to 247 (NT) contributes to the substrate binding site. FMN-binding positions include glycine 268, glycine 297, and 318–319 (YS).

This sequence belongs to the dihydroorotate dehydrogenase family. Type 2 subfamily. In terms of assembly, monomer. Requires FMN as cofactor.

It is found in the cell membrane. It catalyses the reaction (S)-dihydroorotate + a quinone = orotate + a quinol. The protein operates within pyrimidine metabolism; UMP biosynthesis via de novo pathway; orotate from (S)-dihydroorotate (quinone route): step 1/1. Its function is as follows. Catalyzes the conversion of dihydroorotate to orotate with quinone as electron acceptor. This Shewanella sp. (strain ANA-3) protein is Dihydroorotate dehydrogenase (quinone).